A 294-amino-acid chain; its full sequence is Nucleotide-binding protein CLB_3433 (294 aa).

8 to 15 (GLSGAGKT) provides a ligand contact to ATP. 59–62 (DIRG) contributes to the GTP binding site.

This sequence belongs to the RapZ-like family.

Displays ATPase and GTPase activities. This chain is Nucleotide-binding protein CLB_3433, found in Clostridium botulinum (strain ATCC 19397 / Type A).